Reading from the N-terminus, the 73-residue chain is Antimicrobial peptide TsAP-2 (73 aa).

A signal peptide spans 1–22; the sequence is MQIKHLITIFFLVLIVADHCHA. Lys39 bears the Lysine amide mark. The propeptide occupies 45–73; that stretch reads EITSQIEQYRNLQKREAELENLLANLPVY.

This sequence belongs to the non-disulfide-bridged peptide (NDBP) superfamily. Short antimicrobial peptide (group 4) family. In terms of tissue distribution, expressed by the venom gland.

The protein localises to the secreted. Its function is as follows. Antimicrobial peptide. Has a high antibacterial activity against the Gram-positive bacterium S.aureus (MIC=5-17.30 uM), the methicillin-resistant S.aureus (MRSA) (MIC=17.30 uM), and E.faecalis (MIC=69.23 uM). Has antifungal activity against Candida spp. and one Cryptococcus neoformans strains with MICs values ranging from 6.25 to 100 uM. Also shows an inhibitory activity on C.albicans biofilms at high concentrations. Has a moderate hemolytic potency (18% at 20 uM). Also inhibits the growth of the five human cancer cell lines tested (the squamous carcinoma cell line H157 (IC(50)=4.1 uM), the lung adenocarcinoma cell line H838 (11.0 uM), the breast carcinoma cell line MCF-7 (6.4 uM), the androgen-independent prostate adenocarcinoma cell line PC3 (13.3 uM) and the glioblastoma cell line U251-MG (15.4 uM)). In the model of polymicrobial sepsis, it exhibits an antibiotic effect, reducing the levels of microorganisms in the infectious focus and the inflammatory responses in the lung and cecum of septic animals. The protein is Antimicrobial peptide TsAP-2 of Tityus serrulatus (Brazilian scorpion).